Here is a 226-residue protein sequence, read N- to C-terminus: Endonuclease V (226 aa).

Residues D43 and D108 each coordinate Mg(2+).

It belongs to the endonuclease V family. Mg(2+) serves as cofactor.

It localises to the cytoplasm. It carries out the reaction Endonucleolytic cleavage at apurinic or apyrimidinic sites to products with a 5'-phosphate.. Its function is as follows. DNA repair enzyme involved in the repair of deaminated bases. Selectively cleaves double-stranded DNA at the second phosphodiester bond 3' to a deoxyinosine leaving behind the intact lesion on the nicked DNA. The protein is Endonuclease V of Thermosipho melanesiensis (strain DSM 12029 / CIP 104789 / BI429).